Consider the following 586-residue polypeptide: Arginine--tRNA ligase (586 aa).

The 'HIGH' region signature appears at 131-141 (ANPTGPMHVGH).

Belongs to the class-I aminoacyl-tRNA synthetase family. Monomer.

The protein localises to the cytoplasm. It catalyses the reaction tRNA(Arg) + L-arginine + ATP = L-arginyl-tRNA(Arg) + AMP + diphosphate. The chain is Arginine--tRNA ligase from Rhizobium rhizogenes (strain K84 / ATCC BAA-868) (Agrobacterium radiobacter).